Reading from the N-terminus, the 175-residue chain is ATP synthase subunit b, chloroplastic (175 aa).

Residues 22–42 (VFETNIINLAAVVGIVVSFVG) form a helical membrane-spanning segment.

The protein belongs to the ATPase B chain family. F-type ATPases have 2 components, F(1) - the catalytic core - and F(0) - the membrane proton channel. F(1) has five subunits: alpha(3), beta(3), gamma(1), delta(1), epsilon(1). F(0) has four main subunits: a(1), b(1), b'(1) and c(10-14). The alpha and beta chains form an alternating ring which encloses part of the gamma chain. F(1) is attached to F(0) by a central stalk formed by the gamma and epsilon chains, while a peripheral stalk is formed by the delta, b and b' chains.

The protein localises to the plastid. It localises to the chloroplast thylakoid membrane. In terms of biological role, f(1)F(0) ATP synthase produces ATP from ADP in the presence of a proton or sodium gradient. F-type ATPases consist of two structural domains, F(1) containing the extramembraneous catalytic core and F(0) containing the membrane proton channel, linked together by a central stalk and a peripheral stalk. During catalysis, ATP synthesis in the catalytic domain of F(1) is coupled via a rotary mechanism of the central stalk subunits to proton translocation. Functionally, component of the F(0) channel, it forms part of the peripheral stalk, linking F(1) to F(0). The chain is ATP synthase subunit b, chloroplastic from Chlamydomonas reinhardtii (Chlamydomonas smithii).